A 295-amino-acid chain; its full sequence is Aquaporin-9 (295 aa).

Topologically, residues 1 to 24 (MPSEKDRAKKNLVQRLALKSCLAK) are cytoplasmic. A helical transmembrane segment spans residues 25 to 43 (ETLSEFLGTFIMIVLGCGS). At 44–57 (IAQAVLSREKAGGI) the chain is on the extracellular side. The helical transmembrane segment at 58–77 (ITINIGFATAVVMALYATFG) threads the bilayer. Over 78–79 (VS) the chain is Cytoplasmic. An intramembrane region (discontinuously helical) is located at residues 80 to 92 (GGHINPAVSFAMC). The NPA 1 motif lies at 84 to 86 (NPA). The Cytoplasmic portion of the chain corresponds to 93–98 (TFGRME). A helical membrane pass occupies residues 99–123 (WFKFPFYVGAQLLGAFVGAATVFGI). Residues 124-160 (YYDGLMAFADGKLLITGENGTAFIFATYPKPFVSVPG) are Extracellular-facing. Residues 161–178 (AFVDQVVSTMFLLLIVFA) traverse the membrane as a helical segment. The Cytoplasmic segment spans residues 179–190 (IFDSRNLGVPRG). The chain crosses the membrane as a helical span at residues 191–207 (LEPIVIGLLIIVISCSL). At 208–210 (GLN) the chain is on the extracellular side. An intramembrane region (discontinuously helical) is located at residues 211-225 (SGCAMNPARDLSPRL). The NPA 2 signature appears at 216–218 (NPA). Residues 226 to 243 (FTALAGWGFEVFTFGNNF) lie on the Extracellular side of the membrane. The helical transmembrane segment at 244–264 (WWIPVVGPMIGAVLGGLIYVL) threads the bilayer. Residues 265-295 (FIQMHHSNPDPEVKAEPAENNLEKHELSVIM) are Cytoplasmic-facing.

Belongs to the MIP/aquaporin (TC 1.A.8) family. Homotetramer; each monomer provides an independent glycerol/water pore.

It localises to the cell membrane. It is found in the basolateral cell membrane. The enzyme catalyses glycerol(in) = glycerol(out). The catalysed reaction is H2O(in) = H2O(out). It carries out the reaction urea(in) = urea(out). It catalyses the reaction (S)-lactate(in) = (S)-lactate(out). The enzyme catalyses NH4(+)(in) = NH4(+)(out). The catalysed reaction is uracil(in) = uracil(out). It carries out the reaction adenine(out) = adenine(in). It catalyses the reaction 3-hydroxybutanoate(in) = 3-hydroxybutanoate(out). The enzyme catalyses D-sorbitol(in) = D-sorbitol(out). The catalysed reaction is D-mannitol(in) = D-mannitol(out). It carries out the reaction H2O2(out) = H2O2(in). It catalyses the reaction arsenite(in) = arsenite(out). The enzyme catalyses selenite(in) = selenite(out). In terms of biological role, aquaglyceroporins form homotetrameric transmembrane channels, with each monomer independently mediating glycerol and water transport across the plasma membrane along their osmotic gradient. AQP9 is the primary route for glycerol uptake in hepatocytes, supporting hepatic gluconeogenesis. It exhibits broad specificity and may transport various small, non-charged solutes, including carbamides, polyols, purines, and pyrimidines. AQP9 may also facilitate hepatic urea extrusion. Due to its permeability to lactate, AQP9 might participate in the astrocyte-to-neuron lactate shuttle, supplying neurons with energy. Additionally, AQP9 is permeable to arsenite, contributing to arsenic excretion by the liver and providing partial protection against arsenic toxicity. It is also permeable to H2O2 in vivo. Could also be permeable to ammonium. The polypeptide is Aquaporin-9 (Mus musculus (Mouse)).